The chain runs to 206 residues: MTYIVALTGGIGSGKSTVANAFANLGVPLVDADIIARQVVEPGTSALAAIASRYGENILQQDGSLNRAALRQKIFSEQQEKAWLNSLLHPLIQQETQRQLAGIDQPYALWVVPLLVENGLHHRADRVLVVDVTPDIQLARTMARDGITRQQAENILASQVSRQQRLACADDIIDNSGDPLMIAQHVASLHHRYLKLATAAQQDLHQ.

The DPCK domain maps to 4 to 200 (IVALTGGIGS…HRYLKLATAA (197 aa)). An ATP-binding site is contributed by 12-17 (GSGKST).

Belongs to the CoaE family.

It localises to the cytoplasm. It catalyses the reaction 3'-dephospho-CoA + ATP = ADP + CoA + H(+). It functions in the pathway cofactor biosynthesis; coenzyme A biosynthesis; CoA from (R)-pantothenate: step 5/5. Its function is as follows. Catalyzes the phosphorylation of the 3'-hydroxyl group of dephosphocoenzyme A to form coenzyme A. The protein is Dephospho-CoA kinase of Yersinia pestis.